Consider the following 145-residue polypeptide: D-aminoacyl-tRNA deacylase (145 aa).

The short motif at 137 to 138 (GP) is the Gly-cisPro motif, important for rejection of L-amino acids element.

It belongs to the DTD family. As to quaternary structure, homodimer.

It is found in the cytoplasm. The catalysed reaction is glycyl-tRNA(Ala) + H2O = tRNA(Ala) + glycine + H(+). It catalyses the reaction a D-aminoacyl-tRNA + H2O = a tRNA + a D-alpha-amino acid + H(+). An aminoacyl-tRNA editing enzyme that deacylates mischarged D-aminoacyl-tRNAs. Also deacylates mischarged glycyl-tRNA(Ala), protecting cells against glycine mischarging by AlaRS. Acts via tRNA-based rather than protein-based catalysis; rejects L-amino acids rather than detecting D-amino acids in the active site. By recycling D-aminoacyl-tRNA to D-amino acids and free tRNA molecules, this enzyme counteracts the toxicity associated with the formation of D-aminoacyl-tRNA entities in vivo and helps enforce protein L-homochirality. This Shewanella sediminis (strain HAW-EB3) protein is D-aminoacyl-tRNA deacylase.